Consider the following 351-residue polypeptide: MYGFEALTFNIHGGYLEAIVRGHRAGLLTTADYNNLCQCENLDDIKMHLSATKYGPYLQNEPSPLHTTTIVEKCTLKLVDDYKHMLCQATEPMSTFLEYIRYGHMIDNVVLIVTGTLHERDVQELIEKCHPLGMFDSIATLAVAQNMRELYRLVLVDTPLAPYFSECLTSEDLDDMNIEIMRNTLYKAYLEDFYNFCQKLGGATAEIMSDLLAFEADRRAVNITINSIGTELTREDRKKLYSNFGLLYPYGHEELAICEDIDQVRGVMEKYPPYQAIFSKMSYGESQMLDKAFYEEEVRRLCLAFEQQFHYAVFFAYMRLREQEIRNLMWISECVAQNQKSRIHDSVVYMF.

It belongs to the V-ATPase V0D/AC39 subunit family. In terms of assembly, V-ATPase is a heteromultimeric enzyme composed of a peripheral catalytic V1 complex (components A to H) attached to an integral membrane V0 proton pore complex (components: a, c, c'', d and e).

The protein localises to the vacuole membrane. Its function is as follows. Subunit of the integral membrane V0 complex of vacuolar ATPase. Vacuolar ATPase is responsible for acidifying a variety of intracellular compartments in eukaryotic cells, thus providing most of the energy required for transport processes in the vacuolar system. The polypeptide is V-type proton ATPase subunit d2 (VHA-d2) (Arabidopsis thaliana (Mouse-ear cress)).